Reading from the N-terminus, the 511-residue chain is MEEIQRYLQLERSHHQDFLYPLIFQEYIYAFAHDRGFSRSILSENPGYDNKFSLLIVKRLITRMYQQNHFLISSNDYDSNQNLFWARNKNFDFQIISEGFAFIVEIPFYLRLISCLEGKKIVKSQNLRSIHSIFPFLEDNFSHLNFVLDIGIPHPVHVEILVQILRYWVKDPSSLHLLRFLLNEYCNWTSLITPKKASSSFSKRNQRLFLFLYNSHVCEYESVFVFLRNQSSHLRSTSSGVLLERIYFYGKIESLVNVFGKVKDFQANLWLVKEPCMHYIRYQRKSLLASKGTSLFMNKWKCYLVTFWQWHFSLWFHPRRIYINQLSNYSLEFLGYLSNVRINPSVVRSQIVEKSFLINNAIKKFDTLVPIIPLIASLAKGKFCNVLGHPISKPVRADLSDSNIIDRFGRICRNLSHYHSGSSKKKNLYRIKYILRLSCARTLARKHKSTVRAFLKRLGSELLEEFLMSEEDVLYLTLPKASSALWGVYRSRIWYLDIISINDLANHKSKL.

Belongs to the intron maturase 2 family. MatK subfamily.

The protein localises to the plastid. It is found in the chloroplast. Its function is as follows. Usually encoded in the trnK tRNA gene intron. Probably assists in splicing its own and other chloroplast group II introns. This Campsis radicans (Trumpet creeper) protein is Maturase K.